The following is a 182-amino-acid chain: Troponin I, fast skeletal muscle (182 aa).

Glycine 2 is subject to N-acetylglycine. The segment at 2–48 (GDEEKRNRAITARRQHLKSVMLQIAATELEKEEGRREAEKQNYLAEH) is involved in binding TNC. Threonine 12 carries the phosphothreonine; by PHK modification. Positions 97–117 (NQKLFDLRGKFKRPPLRRVRM) are involved in binding TNC and actin. A Phosphoserine; by PKA modification is found at serine 118.

The protein belongs to the troponin I family. In terms of assembly, binds to actin and tropomyosin.

Its function is as follows. Troponin I is the inhibitory subunit of troponin, the thin filament regulatory complex which confers calcium-sensitivity to striated muscle actomyosin ATPase activity. The sequence is that of Troponin I, fast skeletal muscle (TNNI2) from Oryctolagus cuniculus (Rabbit).